The following is a 307-amino-acid chain: MDLYSIKLKVITILAGIGIALLFSLIAYGLLYYFYGLSGISIIYFLLIFVLFIDIIQWLVSPYIIGMTYRLQKVSPMSQYGYLIDIVHDAAEKNNIKEPEVYIAMRGSPNAFAYSSPLAGKRIAFTKSILDILNRDELEAVAGHELGHLKHHDVELLLAIGLIPTLIFYLGYSMIFSGFGRRNGGSFFLVAIILFILSSVFNIMILGVNRIRESYADVNSAMTIPNGAENLQNALAKIYSYSMPSKQTSNSTVNMLMFSDHIENDLGRDYRKLVEKWKNMKPPVSIFSDHPHPAKRIQILERYKNSF.

A run of 2 helical transmembrane segments spans residues 10–30 and 40–60; these read VITILAGIGIALLFSLIAYGL and ISIIYFLLIFVLFIDIIQWLV. His-144 is a Zn(2+) binding site. Glu-145 is an active-site residue. His-148 is a Zn(2+) binding site. Transmembrane regions (helical) follow at residues 156–176 and 187–207; these read LLLAIGLIPTLIFYLGYSMIF and FFLVAIILFILSSVFNIMILG. Glu-213 contacts Zn(2+).

Belongs to the peptidase M48B family. Zn(2+) is required as a cofactor.

Its subcellular location is the cell membrane. This is Protease HtpX homolog from Picrophilus torridus (strain ATCC 700027 / DSM 9790 / JCM 10055 / NBRC 100828 / KAW 2/3).